The sequence spans 46 residues: Mu-segestritoxin-Sf1h (46 aa).

Intrachain disulfides connect cysteine 3-cysteine 19, cysteine 10-cysteine 22, cysteine 18-cysteine 42, and cysteine 24-cysteine 40. Residues 31-33 (RPW) form a keys region for toxin activity region.

The protein belongs to the neurotoxin 16 (SFI) family. As to expression, expressed by the venom gland.

It localises to the secreted. Its function is as follows. Insecticidal toxin. It inhibits insect voltage-gated sodium channels (Nav) by partially blocking the channel pore in DUM neurons from the American cockroach, not by acting as a gating modifier. The inhibition is only partially reversible after prolonged washout. In vivo, the toxin causes flaccid paralysis followed by death when injected into Heliothis virescens larvae. It also causes uncoordinated movements followed by full paralysis to sheep blowflies (Lucilia cuprina). When the toxin is fused to snowdrop lectin, it is orally active against larvae of the tomato moth (Laconobia oleracea), the rice brown planthopper (Nilaparvata lugens), and the peach-potato aphid (Myzus persicae). This chain is Mu-segestritoxin-Sf1h, found in Segestria florentina (Tube-web spider).